Here is a 226-residue protein sequence, read N- to C-terminus: MGKNILFFGPNGSGKGTQGAIVQKKYDIPHIESGAIFREHIGGGTELGLKAKEYIERGDLVPDEITIPMMVSRLQKDDCKKGWILDGFPRSKVQAITLAETLAKEGMALDYVIEIVLDRDIAKERIMGRRLCVNDNNHPNHIAFEAIKPVEKDGKLVCRVCGGDLKTRPDDQDVNAINKRHGIYYDEETGTMAAVNYFKNANGPKVISIDGSASIGEVTELIMKEL.

12–17 (GSGKGT) serves as a coordination point for ATP. Positions 32–61 (ESGAIFREHIGGGTELGLKAKEYIERGDLV) are NMP. Residues S33, R38, 59 to 61 (DLV), 87 to 90 (GFPR), and Q94 each bind AMP. The LID stretch occupies residues 128 to 171 (GRRLCVNDNNHPNHIAFEAIKPVEKDGKLVCRVCGGDLKTRPDD). Residue R129 coordinates ATP. 2 residues coordinate AMP: R168 and R180. A213 provides a ligand contact to ATP.

Belongs to the adenylate kinase family. In terms of assembly, monomer.

Its subcellular location is the cytoplasm. The catalysed reaction is AMP + ATP = 2 ADP. It functions in the pathway purine metabolism; AMP biosynthesis via salvage pathway; AMP from ADP: step 1/1. In terms of biological role, catalyzes the reversible transfer of the terminal phosphate group between ATP and AMP. Plays an important role in cellular energy homeostasis and in adenine nucleotide metabolism. In Desulfotalea psychrophila (strain LSv54 / DSM 12343), this protein is Adenylate kinase.